We begin with the raw amino-acid sequence, 338 residues long: Phenylalanine--tRNA ligase alpha subunit (338 aa).

Position 252 (E252) interacts with Mg(2+).

This sequence belongs to the class-II aminoacyl-tRNA synthetase family. Phe-tRNA synthetase alpha subunit type 1 subfamily. As to quaternary structure, tetramer of two alpha and two beta subunits. The cofactor is Mg(2+).

Its subcellular location is the cytoplasm. It carries out the reaction tRNA(Phe) + L-phenylalanine + ATP = L-phenylalanyl-tRNA(Phe) + AMP + diphosphate + H(+). The chain is Phenylalanine--tRNA ligase alpha subunit from Pseudomonas syringae pv. syringae (strain B728a).